A 109-amino-acid polypeptide reads, in one-letter code: UPF0122 protein BH2485 (109 aa).

Belongs to the UPF0122 family.

Functionally, might take part in the signal recognition particle (SRP) pathway. This is inferred from the conservation of its genetic proximity to ftsY/ffh. May be a regulatory protein. This Halalkalibacterium halodurans (strain ATCC BAA-125 / DSM 18197 / FERM 7344 / JCM 9153 / C-125) (Bacillus halodurans) protein is UPF0122 protein BH2485.